The chain runs to 89 residues: Small ribosomal subunit protein bS20 (89 aa).

Basic residues-rich tracts occupy residues 1 to 10 and 17 to 29; these read MANIKSKIKS and ARKRNSMIKSRVK. Positions 1–29 are disordered; it reads MANIKSKIKSIKTMEKARKRNSMIKSRVK.

This sequence belongs to the bacterial ribosomal protein bS20 family.

Its function is as follows. Binds directly to 16S ribosomal RNA. The chain is Small ribosomal subunit protein bS20 from Mycoplasmopsis pulmonis (strain UAB CTIP) (Mycoplasma pulmonis).